Here is a 356-residue protein sequence, read N- to C-terminus: Nuclear hormone receptor family member nhr-42 (356 aa).

A DNA-binding region (nuclear receptor) is located at residues 7-82; sequence SQTCLICGDS…VGMRESAVLS (76 aa). The segment at 10–30 adopts an NR C4-type zinc-finger fold; sequence CLICGDSADSLHFGALSCRAC. The NR C4-type; atypical zinc-finger motif lies at 48–70; it reads CDRQCKVDTGMRKLCASCRYDKC. The 249-residue stretch at 108-356 folds into the NR LBD domain; that stretch reads TSDSVLENLQ…HSSIFGNMAE (249 aa).

It belongs to the nuclear hormone receptor family.

The protein localises to the nucleus. In terms of biological role, orphan nuclear receptor. This is Nuclear hormone receptor family member nhr-42 (nhr-42) from Caenorhabditis elegans.